The primary structure comprises 365 residues: Fructose-1,6-bisphosphate aldolase/phosphatase (365 aa).

Asp-11 acts as the Proton acceptor; for FBP phosphatase activity in catalysis. 4 residues coordinate Mg(2+): Asp-11, His-18, Asp-52, and Asp-53. Beta-D-fructose 1,6-bisphosphate is bound at residue His-18. His-18 lines the dihydroxyacetone phosphate pocket. Tyr-90 is a beta-D-fructose 1,6-bisphosphate binding site. Gln-94 provides a ligand contact to Mg(2+). 103–104 (GN) is a beta-D-fructose 1,6-bisphosphate binding site. Mg(2+) is bound at residue Asp-131. Lys-132 contacts beta-D-fructose 1,6-bisphosphate. Lys-132 contacts dihydroxyacetone phosphate. Tyr-228 acts as the Proton donor/acceptor; for FBP aldolase activity in catalysis. Residues Lys-231, Asp-232, and Asp-233 each coordinate Mg(2+). Lys-231 serves as the catalytic Schiff-base intermediate with DHAP; for FBP aldolase activity. Residues 241 to 242 (QS), Arg-265, Asp-286, and Tyr-347 contribute to the beta-D-fructose 1,6-bisphosphate site. The dihydroxyacetone phosphate site is built by Arg-265 and Asp-286.

It belongs to the FBP aldolase/phosphatase family. In terms of assembly, homooctamer; dimer of tetramers. The cofactor is Mg(2+).

It catalyses the reaction beta-D-fructose 1,6-bisphosphate + H2O = beta-D-fructose 6-phosphate + phosphate. It carries out the reaction beta-D-fructose 1,6-bisphosphate = D-glyceraldehyde 3-phosphate + dihydroxyacetone phosphate. It functions in the pathway carbohydrate biosynthesis; gluconeogenesis. In terms of biological role, catalyzes two subsequent steps in gluconeogenesis: the aldol condensation of dihydroxyacetone phosphate (DHAP) and glyceraldehyde-3-phosphate (GA3P) to fructose-1,6-bisphosphate (FBP), and the dephosphorylation of FBP to fructose-6-phosphate (F6P). In Methanothermobacter marburgensis (strain ATCC BAA-927 / DSM 2133 / JCM 14651 / NBRC 100331 / OCM 82 / Marburg) (Methanobacterium thermoautotrophicum), this protein is Fructose-1,6-bisphosphate aldolase/phosphatase.